The chain runs to 377 residues: Transmembrane protein 237A (377 aa).

Basic and acidic residues-rich tracts occupy residues 1 to 11 (MCVTSRADKMP), 43 to 64 (LESRRQSESREPLTPEPHDNPP), and 74 to 87 (HTFENEGEQQDHPN). The disordered stretch occupies residues 1–124 (MCVTSRADKM…NQSHNELGVE (124 aa)). The next 4 membrane-spanning stretches (helical) occupy residues 198–218 (IIGLFSHGFLAGYAVWNIIVV), 239–259 (LAYPAQSLLYLLLAISTVSAF), 273–293 (GFLTLDPAALASFLYFAALIL), and 326–346 (PWIVVNLVVALLVGLAWVFVA).

Belongs to the TMEM237 family.

The protein resides in the membrane. It is found in the cell projection. The protein localises to the cilium. Component of the transition zone in primary cilia. Required for ciliogenesis. The sequence is that of Transmembrane protein 237A (tmem237a) from Danio rerio (Zebrafish).